We begin with the raw amino-acid sequence, 71 residues long: Protein SlyX homolog (71 aa).

It belongs to the SlyX family.

In Rhodopseudomonas palustris (strain HaA2), this protein is Protein SlyX homolog.